A 342-amino-acid chain; its full sequence is MEPAFGEVNQLGGVFVNGRPLPNAIRLRIVELAQLGIRPCDISRQLRVSHGCVSKILARYNETGSILPGAIGGSKPRVTTPTVVKHIRTYKQRDPGIFAWEIRDRLLADGVCDKYNVPSVSSISRILRNKIGNLAQQGHYDSYKQHQPAPQPALPYNHIYSYPSPITAAAAKVPTPPGVPAIPGSVALPRTWPSSHSVTDILGIRSITDQGVSDSSPYHSPKVEEWSSLGRNNFSAAAPHAVNGLEKGALEQEAKYGQAPNGLPAVSSFVSASSMAPYPTPAQVSPYMTYSAAPSGYVAGHGWQHAGSTPLSPHNCDIPTSLAFKGMQAAREGSHSVAASAL.

A DNA-binding region (paired) is located at residues 4–130 (AFGEVNQLGG…SSISRILRNK (127 aa)). The tract at residues 7 to 63 (EVNQLGGVFVNGRPLPNAIRLRIVELAQLGIRPCDISRQLRVSHGCVSKILARYNET) is PAI subdomain. Positions 82–130 (TVVKHIRTYKQRDPGIFAWEIRDRLLADGVCDKYNVPSVSSISRILRNK) are RED subdomain. Residues 168 to 189 (AAAAKVPTPPGVPAIPGSVALP) are interaction with KDM5B.

Interacts with KDM5B.

It localises to the nucleus. Its function is as follows. Transcription factor required for normal development of thymus, parathyroid glands, ultimobranchial bodies, teeth, skeletal elements of skull and larynx as well as distal limbs. This is Paired box protein Pax-9 from Rattus norvegicus (Rat).